Reading from the N-terminus, the 512-residue chain is Glutathione-binding protein GsiB (512 aa).

A signal peptide spans 1 to 26 (MARAVHRSGLVALGIVTALMASCAFA).

The protein belongs to the bacterial solute-binding protein 5 family. In terms of assembly, the complex is composed of two ATP-binding proteins (GsiA), two transmembrane proteins (GsiC and GsiD) and a solute-binding protein (GsiB).

Its subcellular location is the periplasm. Functionally, part of the ABC transporter complex GsiABCD involved in glutathione import. Binds glutathione. The sequence is that of Glutathione-binding protein GsiB from Shigella dysenteriae serotype 1 (strain Sd197).